Consider the following 494-residue polypeptide: AAA-ATPase At2g18190 (494 aa).

A helical transmembrane segment spans residues 13-29 (SSLFTAYASLTGFLMLF). ATP is bound at residue 251–258 (GPPGTGKS). A compositionally biased stretch (basic and acidic residues) spans 459–470 (TCRKLDGDDKHN). The interval 459-494 (TCRKLDGDDKHNVSSTNDLKKTKKKKKGGKGKAKGN) is disordered. Positions 479–494 (KTKKKKKGGKGKAKGN) are enriched in basic residues.

This sequence belongs to the AAA ATPase family. BCS1 subfamily. Mg(2+) serves as cofactor.

The protein localises to the membrane. The enzyme catalyses ATP + H2O = ADP + phosphate + H(+). This is AAA-ATPase At2g18190 from Arabidopsis thaliana (Mouse-ear cress).